Here is a 1010-residue protein sequence, read N- to C-terminus: Translation initiation factor IF-2 (1010 aa).

2 disordered regions span residues 54 to 350 and 364 to 420; these read KGLA…FEDD and PSFT…RPES. Residues 57 to 70 are compositionally biased toward polar residues; it reads ASSTSKNSTGQRES. Over residues 112-124 the composition is skewed to pro residues; the sequence is ISPPRPPVKPLVA. The span at 145–155 shows a compositional bias: polar residues; sequence HSPSVKETPTE. The span at 200 to 258 shows a compositional bias: basic and acidic residues; the sequence is DRPRGEKRERGESENAPSPERRVGLAKPEKPTLNRKPDGKSPKLAEPAREVRETVELKR. The span at 378–389 shows a compositional bias: low complexity; sequence TAKAAPPGTPTA. A compositionally biased stretch (basic and acidic residues) spans 406 to 419; it reads KSERQEPQEEKRPE. The 174-residue stretch at 502-675 folds into the tr-type G domain; it reads RRPPVVTIMG…LLVAEVEELV (174 aa). Residues 511–518 form a G1 region; sequence GHVDHGKT. Residue 511 to 518 coordinates GTP; the sequence is GHVDHGKT. A G2 region spans residues 536-540; it reads GITQH. Residues 561-564 form a G3 region; sequence DTPG. GTP contacts are provided by residues 561-565 and 615-618; these read DTPGH and NKVD. Residues 615 to 618 are G4; sequence NKVD. Residues 651–653 form a G5 region; it reads SAL.

It belongs to the TRAFAC class translation factor GTPase superfamily. Classic translation factor GTPase family. IF-2 subfamily.

Its subcellular location is the cytoplasm. Functionally, one of the essential components for the initiation of protein synthesis. Protects formylmethionyl-tRNA from spontaneous hydrolysis and promotes its binding to the 30S ribosomal subunits. Also involved in the hydrolysis of GTP during the formation of the 70S ribosomal complex. The polypeptide is Translation initiation factor IF-2 (Microcystis aeruginosa (strain NIES-843 / IAM M-2473)).